The chain runs to 758 residues: 5-methyltetrahydropteroyltriglutamate--homocysteine methyltransferase (758 aa).

5-methyltetrahydropteroyltri-L-glutamate contacts are provided by residues 17-20 and lysine 114; that span reads RELK. L-homocysteine-binding positions include 429 to 431 and glutamate 482; that span reads IGS. L-methionine-binding positions include 429–431 and glutamate 482; that span reads IGS. Residues 513–514 and tryptophan 559 contribute to the 5-methyltetrahydropteroyltri-L-glutamate site; that span reads RC. Residue aspartate 597 coordinates L-homocysteine. Aspartate 597 is a binding site for L-methionine. Residue glutamate 603 coordinates 5-methyltetrahydropteroyltri-L-glutamate. The Zn(2+) site is built by histidine 639, cysteine 641, and glutamate 663. Catalysis depends on histidine 692, which acts as the Proton donor. Cysteine 724 serves as a coordination point for Zn(2+).

The protein belongs to the vitamin-B12 independent methionine synthase family. The cofactor is Zn(2+).

The catalysed reaction is 5-methyltetrahydropteroyltri-L-glutamate + L-homocysteine = tetrahydropteroyltri-L-glutamate + L-methionine. It participates in amino-acid biosynthesis; L-methionine biosynthesis via de novo pathway; L-methionine from L-homocysteine (MetE route): step 1/1. Its function is as follows. Catalyzes the transfer of a methyl group from 5-methyltetrahydrofolate to homocysteine resulting in methionine formation. In Buchnera aphidicola subsp. Acyrthosiphon pisum (strain APS) (Acyrthosiphon pisum symbiotic bacterium), this protein is 5-methyltetrahydropteroyltriglutamate--homocysteine methyltransferase.